Reading from the N-terminus, the 380-residue chain is Gibberellin 20 oxidase 3 (380 aa).

One can recognise a Fe2OG dioxygenase domain in the interval 221–321 (DSDSIFRLNY…RKTFAFFLCP (101 aa)). 3 residues coordinate Fe cation: His-246, Asp-248, and His-302. Arg-312 is a catalytic residue.

The protein belongs to the iron/ascorbate-dependent oxidoreductase family. GA20OX subfamily. Fe(2+) serves as cofactor. L-ascorbate is required as a cofactor. Expressed at high level in developing siliques. Detected in seeds, roots, leaves and inflorescences. In seeds, specifically detected at the outer layer of the outer integument.

It carries out the reaction gibberellin A12 + 2 2-oxoglutarate + 3 O2 + H(+) = gibberellin A9 + 2 succinate + 3 CO2 + 2 H2O. The enzyme catalyses gibberellin A12 + 3 2-oxoglutarate + 3 O2 = gibberellin A25 + 3 succinate + 3 CO2 + H2O + H(+). It catalyses the reaction gibberellin A53 + 2 2-oxoglutarate + 3 O2 + H(+) = gibberellin A20 + 2 succinate + 3 CO2 + 2 H2O. It participates in plant hormone biosynthesis; gibberellin biosynthesis. In terms of biological role, key oxidase enzyme in the biosynthesis of gibberellin that catalyzes the conversion of GA12 and GA53 to GA9 and GA20 respectively, via a three-step oxidation at C-20 of the GA skeleton, and GA25 is also formed as a minor product. GA53 is less effectively oxidized than GA12. The polypeptide is Gibberellin 20 oxidase 3 (GA20OX3) (Arabidopsis thaliana (Mouse-ear cress)).